Here is a 1199-residue protein sequence, read N- to C-terminus: Putative pyruvate-flavodoxin oxidoreductase (1199 aa).

2 4Fe-4S ferredoxin-type domains span residues 681-710 (EIPV…GKVY) and 737-766 (FTIQ…QPRL). Positions 690, 693, 696, 700, 746, 749, 752, 756, 820, 823, 848, and 1079 each coordinate [4Fe-4S] cluster.

This sequence belongs to the pyruvate:ferredoxin/flavodoxin oxidoreductase family. [4Fe-4S] cluster is required as a cofactor.

The catalysed reaction is oxidized [flavodoxin] + pyruvate + CoA + 2 H(+) = reduced [flavodoxin] + acetyl-CoA + CO2. Oxidoreductase required for the transfer of electrons from pyruvate to flavodoxin. In Synechocystis sp. (strain ATCC 27184 / PCC 6803 / Kazusa), this protein is Putative pyruvate-flavodoxin oxidoreductase (nifJ).